The sequence spans 1152 residues: DNA-directed RNA polymerase subunit beta (1152 aa).

Belongs to the RNA polymerase beta chain family. As to quaternary structure, the RNAP catalytic core consists of 2 alpha, 1 beta, 1 beta' and 1 omega subunit. When a sigma factor is associated with the core the holoenzyme is formed, which can initiate transcription.

The catalysed reaction is RNA(n) + a ribonucleoside 5'-triphosphate = RNA(n+1) + diphosphate. Functionally, DNA-dependent RNA polymerase catalyzes the transcription of DNA into RNA using the four ribonucleoside triphosphates as substrates. This Deinococcus geothermalis (strain DSM 11300 / CIP 105573 / AG-3a) protein is DNA-directed RNA polymerase subunit beta.